The primary structure comprises 602 residues: Aspartate--tRNA(Asp/Asn) ligase (602 aa).

Position 170 (Glu-170) interacts with L-aspartate. The tract at residues Gln-194–Lys-197 is aspartate. Arg-216 is an L-aspartate binding site. ATP contacts are provided by residues Arg-216 to Glu-218 and Gln-225. His-448 is an L-aspartate binding site. ATP is bound at residue Glu-482. Arg-489 lines the L-aspartate pocket. ATP is bound at residue Gly-534–Arg-537. The segment at Gly-559 to Lys-602 is disordered. Basic and acidic residues predominate over residues Gln-575–Gly-589.

It belongs to the class-II aminoacyl-tRNA synthetase family. Type 1 subfamily. As to quaternary structure, homodimer.

It is found in the cytoplasm. It carries out the reaction tRNA(Asx) + L-aspartate + ATP = L-aspartyl-tRNA(Asx) + AMP + diphosphate. In terms of biological role, aspartyl-tRNA synthetase with relaxed tRNA specificity since it is able to aspartylate not only its cognate tRNA(Asp) but also tRNA(Asn). Reaction proceeds in two steps: L-aspartate is first activated by ATP to form Asp-AMP and then transferred to the acceptor end of tRNA(Asp/Asn). This is Aspartate--tRNA(Asp/Asn) ligase from Rhodococcus opacus (strain B4).